We begin with the raw amino-acid sequence, 434 residues long: Trigger factor (434 aa).

Positions 161-246 constitute a PPIase FKBP-type domain; that stretch reads EDRATIDFTG…LKKVEERELP (86 aa).

Belongs to the FKBP-type PPIase family. Tig subfamily.

Its subcellular location is the cytoplasm. The catalysed reaction is [protein]-peptidylproline (omega=180) = [protein]-peptidylproline (omega=0). In terms of biological role, involved in protein export. Acts as a chaperone by maintaining the newly synthesized protein in an open conformation. Functions as a peptidyl-prolyl cis-trans isomerase. This is Trigger factor from Pectobacterium atrosepticum (strain SCRI 1043 / ATCC BAA-672) (Erwinia carotovora subsp. atroseptica).